Reading from the N-terminus, the 504-residue chain is Galactose/methyl galactoside import ATP-binding protein MglA (504 aa).

ABC transporter domains are found at residues 8 to 247 and 258 to 504; these read LEMN…VGRD and TPGE…TRFI. An ATP-binding site is contributed by 40 to 47; that stretch reads GENGAGKS.

This sequence belongs to the ABC transporter superfamily. Galactose/methyl galactoside importer (TC 3.A.1.2.3) family. As to quaternary structure, the complex is composed of one ATP-binding protein (MglA), two transmembrane proteins (MglC) and a solute-binding protein (MglB).

It is found in the cell membrane. The enzyme catalyses D-galactose(out) + ATP + H2O = D-galactose(in) + ADP + phosphate + H(+). The catalysed reaction is methyl beta-D-galactoside(out) + ATP + H2O = methyl beta-D-galactoside(in) + ADP + phosphate + H(+). Functionally, part of the ABC transporter complex MglABC involved in galactose/methyl galactoside import. Responsible for energy coupling to the transport system. The protein is Galactose/methyl galactoside import ATP-binding protein MglA of Clostridium tetani (strain Massachusetts / E88).